The chain runs to 491 residues: Glycogen synthase 2 (491 aa).

Lys16 serves as a coordination point for ADP-alpha-D-glucose.

Belongs to the glycosyltransferase 1 family. Bacterial/plant glycogen synthase subfamily.

It catalyses the reaction [(1-&gt;4)-alpha-D-glucosyl](n) + ADP-alpha-D-glucose = [(1-&gt;4)-alpha-D-glucosyl](n+1) + ADP + H(+). It participates in glycan biosynthesis; glycogen biosynthesis. In terms of biological role, synthesizes alpha-1,4-glucan chains using ADP-glucose. This is Glycogen synthase 2 from Nitrosococcus oceani (strain ATCC 19707 / BCRC 17464 / JCM 30415 / NCIMB 11848 / C-107).